A 117-amino-acid polypeptide reads, in one-letter code: Ribonuclease P protein component (117 aa).

This sequence belongs to the RnpA family. In terms of assembly, consists of a catalytic RNA component (M1 or rnpB) and a protein subunit.

It catalyses the reaction Endonucleolytic cleavage of RNA, removing 5'-extranucleotides from tRNA precursor.. Functionally, RNaseP catalyzes the removal of the 5'-leader sequence from pre-tRNA to produce the mature 5'-terminus. It can also cleave other RNA substrates such as 4.5S RNA. The protein component plays an auxiliary but essential role in vivo by binding to the 5'-leader sequence and broadening the substrate specificity of the ribozyme. This chain is Ribonuclease P protein component, found in Staphylococcus aureus (strain bovine RF122 / ET3-1).